The chain runs to 305 residues: Homoserine O-acetyltransferase (305 aa).

The active-site Acyl-thioester intermediate is Cys-142. Positions 163 and 192 each coordinate substrate. His-235 acts as the Proton acceptor in catalysis. Glu-237 is a catalytic residue. Substrate is bound at residue Arg-249.

The protein belongs to the MetA family.

It localises to the cytoplasm. The catalysed reaction is L-homoserine + acetyl-CoA = O-acetyl-L-homoserine + CoA. Its pathway is amino-acid biosynthesis; L-methionine biosynthesis via de novo pathway; O-acetyl-L-homoserine from L-homoserine: step 1/1. In terms of biological role, transfers an acetyl group from acetyl-CoA to L-homoserine, forming acetyl-L-homoserine. In Phocaeicola vulgatus (strain ATCC 8482 / DSM 1447 / JCM 5826 / CCUG 4940 / NBRC 14291 / NCTC 11154) (Bacteroides vulgatus), this protein is Homoserine O-acetyltransferase.